Reading from the N-terminus, the 151-residue chain is Sec-independent protein translocase protein TatB (151 aa).

Residues 1–21 (MFDIGFLELLICGVIALLVLG) traverse the membrane as a helical segment. 2 stretches are compositionally biased toward basic and acidic residues: residues 87–99 (KYEHMILPDDQTR) and 122–132 (EPPHEPVRDEA). The segment at 87–151 (KYEHMILPDD…SPTSPSDKYS (65 aa)) is disordered. Low complexity predominate over residues 134–151 (ASDQPSDSSPTSPSDKYS).

It belongs to the TatB family. In terms of assembly, the Tat system comprises two distinct complexes: a TatABC complex, containing multiple copies of TatA, TatB and TatC subunits, and a separate TatA complex, containing only TatA subunits. Substrates initially bind to the TatABC complex, which probably triggers association of the separate TatA complex to form the active translocon.

The protein resides in the cell inner membrane. In terms of biological role, part of the twin-arginine translocation (Tat) system that transports large folded proteins containing a characteristic twin-arginine motif in their signal peptide across membranes. Together with TatC, TatB is part of a receptor directly interacting with Tat signal peptides. TatB may form an oligomeric binding site that transiently accommodates folded Tat precursor proteins before their translocation. This Marinobacter nauticus (strain ATCC 700491 / DSM 11845 / VT8) (Marinobacter aquaeolei) protein is Sec-independent protein translocase protein TatB.